Reading from the N-terminus, the 431-residue chain is Serine--tRNA ligase (431 aa).

237 to 239 (TAE) is an L-serine binding site. 268 to 270 (RSE) provides a ligand contact to ATP. Glu291 serves as a coordination point for L-serine. Position 355–358 (355–358 (EISS)) interacts with ATP. An L-serine-binding site is contributed by Ser390.

Belongs to the class-II aminoacyl-tRNA synthetase family. Type-1 seryl-tRNA synthetase subfamily. In terms of assembly, homodimer. The tRNA molecule binds across the dimer.

The protein resides in the cytoplasm. It catalyses the reaction tRNA(Ser) + L-serine + ATP = L-seryl-tRNA(Ser) + AMP + diphosphate + H(+). The catalysed reaction is tRNA(Sec) + L-serine + ATP = L-seryl-tRNA(Sec) + AMP + diphosphate + H(+). Its pathway is aminoacyl-tRNA biosynthesis; selenocysteinyl-tRNA(Sec) biosynthesis; L-seryl-tRNA(Sec) from L-serine and tRNA(Sec): step 1/1. In terms of biological role, catalyzes the attachment of serine to tRNA(Ser). Is also able to aminoacylate tRNA(Sec) with serine, to form the misacylated tRNA L-seryl-tRNA(Sec), which will be further converted into selenocysteinyl-tRNA(Sec). This is Serine--tRNA ligase from Neisseria meningitidis serogroup A / serotype 4A (strain DSM 15465 / Z2491).